Consider the following 86-residue polypeptide: RNA-binding protein Hfq (86 aa).

The Sm domain occupies 9–68 (DIFLNVLRRERIQVSIYLFNGIKLQGHIESFDQFVIVLKNTISQMVYKHAVSTIVPSKFV).

The protein belongs to the Hfq family. In terms of assembly, homohexamer.

In terms of biological role, RNA chaperone that binds small regulatory RNA (sRNAs) and mRNAs to facilitate mRNA translational regulation in response to envelope stress, environmental stress and changes in metabolite concentrations. Also binds with high specificity to tRNAs. This chain is RNA-binding protein Hfq, found in Baumannia cicadellinicola subsp. Homalodisca coagulata.